A 209-amino-acid chain; its full sequence is Ribosomal RNA large subunit methyltransferase E (209 aa).

Gly-63, Trp-65, Asp-83, Asp-99, and Asp-124 together coordinate S-adenosyl-L-methionine. Catalysis depends on Lys-164, which acts as the Proton acceptor.

This sequence belongs to the class I-like SAM-binding methyltransferase superfamily. RNA methyltransferase RlmE family.

It is found in the cytoplasm. It catalyses the reaction uridine(2552) in 23S rRNA + S-adenosyl-L-methionine = 2'-O-methyluridine(2552) in 23S rRNA + S-adenosyl-L-homocysteine + H(+). Its function is as follows. Specifically methylates the uridine in position 2552 of 23S rRNA at the 2'-O position of the ribose in the fully assembled 50S ribosomal subunit. The chain is Ribosomal RNA large subunit methyltransferase E from Shewanella baltica (strain OS223).